The sequence spans 205 residues: Myb-related protein 305 (205 aa).

HTH myb-type domains lie at 10-62 (DVEV…LNYL) and 63-117 (RPDV…QKHM). 2 DNA-binding regions (H-T-H motif) span residues 38-62 (WNSL…LNYL) and 90-113 (WSKI…RTRI).

In terms of tissue distribution, expressed only in flowers.

It is found in the nucleus. Its function is as follows. Transcription factor. The sequence is that of Myb-related protein 305 from Antirrhinum majus (Garden snapdragon).